We begin with the raw amino-acid sequence, 65 residues long: Neurotoxin Bot2 (65 aa).

An LCN-type CS-alpha/beta domain is found at 2 to 64 (RDAYIAQPEN…VPIRIEGKCH (63 aa)). Disulfide bonds link Cys-12–Cys-63, Cys-16–Cys-36, Cys-22–Cys-46, and Cys-26–Cys-48. Phe-65 is modified (phenylalanine amide).

Belongs to the long (4 C-C) scorpion toxin superfamily. Sodium channel inhibitor family. Alpha subfamily. In terms of tissue distribution, expressed by the venom gland.

It localises to the secreted. Binds to sodium channels (Nav) and inhibits the inactivation of the activated channels, thereby blocking neuronal transmission. The chain is Neurotoxin Bot2 from Buthus occitanus tunetanus (Common European scorpion).